We begin with the raw amino-acid sequence, 485 residues long: Maturase K (485 aa).

Belongs to the intron maturase 2 family. MatK subfamily.

The protein localises to the plastid. It is found in the chloroplast. Usually encoded in the trnK tRNA gene intron. Probably assists in splicing its own and other chloroplast group II introns. The protein is Maturase K of Malus domestica (Apple).